The following is a 572-amino-acid chain: Hemagglutinin-neuraminidase (572 aa).

At 1–31 the chain is on the intravirion side; it reads MEYWKHTNHRKDAGNELETSMATHGNKLTNK. A helical transmembrane segment spans residues 32–52; sequence ITYILWTIILVLLSIVLIIVL. At 53 to 572 the chain is on the virion surface side; sequence INSIKSEKAH…FKTEVPKSCS (520 aa). Cystine bridges form between Cys-190-Cys-214 and Cys-256-Cys-269. The tract at residues 252-257 is involved in neuraminidase activity; the sequence is NRKSCS. 2 N-linked (GlcNAc...) asparagine; by host glycosylation sites follow: Asn-308 and Asn-351. Disulfide bonds link Cys-355–Cys-469 and Cys-463–Cys-473. Residue Asn-523 is glycosylated (N-linked (GlcNAc...) asparagine; by host). The cysteines at positions 535 and 544 are disulfide-linked.

This sequence belongs to the paramyxoviruses hemagglutinin-neuraminidase family. Homotetramer; composed of disulfide-linked homodimers. Interacts with F protein trimer.

It localises to the virion membrane. The protein resides in the host cell membrane. The catalysed reaction is Hydrolysis of alpha-(2-&gt;3)-, alpha-(2-&gt;6)-, alpha-(2-&gt;8)- glycosidic linkages of terminal sialic acid residues in oligosaccharides, glycoproteins, glycolipids, colominic acid and synthetic substrates.. In terms of biological role, attaches the virus to sialic acid-containing cell receptors and thereby initiating infection. Binding of HN protein to the receptor induces a conformational change that allows the F protein to trigger virion/cell membranes fusion. Functionally, neuraminidase activity ensures the efficient spread of the virus by dissociating the mature virions from the neuraminic acid containing glycoproteins. This chain is Hemagglutinin-neuraminidase (HN), found in Human parainfluenza 3 virus (strain Tex/9305/82) (HPIV-3).